A 303-amino-acid chain; its full sequence is Recombination-associated protein RdgC (303 aa).

This sequence belongs to the RdgC family.

It localises to the cytoplasm. The protein resides in the nucleoid. Its function is as follows. May be involved in recombination. The sequence is that of Recombination-associated protein RdgC from Salmonella newport (strain SL254).